Reading from the N-terminus, the 1019-residue chain is MYILVWKEGQQIRTFQDLEESVQFRTASNITDGQIFSINVTPTMGKGGETGETQLRRLMYLSASTEPENCNADYVGDMAHFATLRNKSIGVSGFYMYSAPFLFQVIQGTDEDLDFLCANGSADPRHQRCIELADGPTTGRMYGWWHLKDSHIDNITKDPAIKTILIEIARSFSSMWSYLPRNAANMVLLGKNPNKQAPEPMSVVVTVIYLVEFSVIMAHPGLSEQCPDILPAFVDACVPHVDGTGGEVAKFIIAICMAYWPINSDEHALVGLQQLSDDLAELRSLQEDGSARSLIYSRCGLHFGRAMLCNAGFRKADFTLLGDWINSASRITSLSVNSKVPLLLSFLVRCLLGDEMRVELERSGLHKVGGRVKPVQVYQFNAPELDTATVRGEIKQFNPGRERALCPVKPYESLHPAHPDPIFDDTPRENQPELSQVQRRDSLVDRLSQIAKLAFPSSMMAGGEGQLITLTYISQAAHPVSRLDLASIQRIAFARNESSNITKSLLYVSGLFVQTLEGTKGAVVSLYLKNRQDKRHKDVVAAFMAPIDEGVYGSPLDMTSATEEMLATFTPLHDVLSQLAKSFISLETYVPSTVVRHLAAGNNPRNLQPVSVEVVMLATAISSFTPLSEKCSLTEVWTICNTFIVACTSAICNEGGEVIKLIGDCVPAYFPPTNADNAVHACQEIVSFCAQLRAAFHDVLDCRSVVACGVGLDYGQVIMVQCGSLGMTEFVVAGEVRARVLEVEALTREAGRAIVITEPVPERQSPKLRDTGIVPCQEGVDGARCYGILGPEWELDVATIKKNINGFLKDARALAANKKVDDGTNISCRGGNPPAGGIPTSPKVRPPGRTNSVSSYTPDPKQALDPRMAESVFLDMCHQGDTVNNSIAVKLGLAANEDGFDGGWILTWYVELMPVKQAIKVLTQLRIGNMSDNFVDDNNVGELLEKCIPTRSLQVLDLSNNPGLTKVIALKPKHNTQVREILLNGTRIAPTEQRKQQTSKNVNRLCASTDLKGSHKYEH.

The BLUF 1 domain maps to 55 to 148; that stretch reads LRRLMYLSAS…GRMYGWWHLK (94 aa). Residues 204-332 enclose the Guanylate cyclase 1 domain; that stretch reads VVTVIYLVEF…DWINSASRIT (129 aa). In terms of domain architecture, BLUF 2 spans 467 to 559; sequence LITLTYISQA…GVYGSPLDMT (93 aa). A Guanylate cyclase 2 domain is found at 615 to 744; it reads VMLATAISSF…EVRARVLEVE (130 aa). The disordered stretch occupies residues 825 to 863; it reads NISCRGGNPPAGGIPTSPKVRPPGRTNSVSSYTPDPKQA.

Belongs to the adenylyl cyclase class-4/guanylyl cyclase family. Heterotetramer of two alpha and two beta subunits.

Its subcellular location is the cell projection. The protein resides in the cilium. It localises to the flagellum. The chain is Photoactivated adenylate cyclase subunit alpha-like protein 1224-5/1F from Euglena gracilis.